The sequence spans 248 residues: 2,3-bisphosphoglycerate-dependent phosphoglycerate mutase (248 aa).

Substrate contacts are provided by residues 8-15 (RHGESTWN), 21-22 (TG), arginine 60, 87-90 (ERHY), lysine 98, and 114-115 (RR). Histidine 9 serves as the catalytic Tele-phosphohistidine intermediate. Residue glutamate 87 is the Proton donor/acceptor of the active site. The tract at residues 118-137 (DTPPPALEPTDPRASYDDPR) is disordered. Basic and acidic residues predominate over residues 127–137 (TDPRASYDDPR). 183-184 (GN) contributes to the substrate binding site.

It belongs to the phosphoglycerate mutase family. BPG-dependent PGAM subfamily. As to quaternary structure, homodimer.

It carries out the reaction (2R)-2-phosphoglycerate = (2R)-3-phosphoglycerate. It functions in the pathway carbohydrate degradation; glycolysis; pyruvate from D-glyceraldehyde 3-phosphate: step 3/5. Its function is as follows. Catalyzes the interconversion of 2-phosphoglycerate and 3-phosphoglycerate. In Cupriavidus necator (strain ATCC 17699 / DSM 428 / KCTC 22496 / NCIMB 10442 / H16 / Stanier 337) (Ralstonia eutropha), this protein is 2,3-bisphosphoglycerate-dependent phosphoglycerate mutase.